The chain runs to 340 residues: Lipoyl synthase (340 aa).

Positions 83, 88, 94, 109, 113, 116, and 323 each coordinate [4Fe-4S] cluster. Positions 95-312 constitute a Radical SAM core domain; the sequence is FSGGTATFMI…AEEGYKMGFK (218 aa).

The protein belongs to the radical SAM superfamily. Lipoyl synthase family. It depends on [4Fe-4S] cluster as a cofactor.

The protein localises to the cytoplasm. The catalysed reaction is [[Fe-S] cluster scaffold protein carrying a second [4Fe-4S](2+) cluster] + N(6)-octanoyl-L-lysyl-[protein] + 2 oxidized [2Fe-2S]-[ferredoxin] + 2 S-adenosyl-L-methionine + 4 H(+) = [[Fe-S] cluster scaffold protein] + N(6)-[(R)-dihydrolipoyl]-L-lysyl-[protein] + 4 Fe(3+) + 2 hydrogen sulfide + 2 5'-deoxyadenosine + 2 L-methionine + 2 reduced [2Fe-2S]-[ferredoxin]. It functions in the pathway protein modification; protein lipoylation via endogenous pathway; protein N(6)-(lipoyl)lysine from octanoyl-[acyl-carrier-protein]: step 2/2. Its function is as follows. Catalyzes the radical-mediated insertion of two sulfur atoms into the C-6 and C-8 positions of the octanoyl moiety bound to the lipoyl domains of lipoate-dependent enzymes, thereby converting the octanoylated domains into lipoylated derivatives. The protein is Lipoyl synthase of Pseudomonas fluorescens (strain Pf0-1).